Here is a 425-residue protein sequence, read N- to C-terminus: MLDIKRLRKDFAGIREKLQTRGEDISGLEKFGSLDEKRRQVIVKVEELKSRRNQVSQEVAQLKREKKDADHLIKEMRDVSDEIKGLDETLRQLDEELDQLLLAIPNVPHESTPVGETEDDNVEVRKWGEVPNFPFEPKAHWDLATALGIVDFERAAKVTGSRFAFYKGAGARLERALINFMMDLHHDKHGYEEVLPPYLVNRTSMTGTGQLPKFEEDAFKIREEDYFLIPTAEVPVTNLHRDEILSADQLPIAYTAYSMNFRSEAGSAGRDTRGLIRQHQFNKVELVRFVAPEDSYDELEKLTGHAEKVLQLLKLPYRVMSMCTADLGFTAAKKYDLEVWIPSANTYREISSCSNFEDFQARRANIKFRREAKGKAEFVHTLNGSGLAVGRTVAAILENYQQEDGTIVIPEVLRPYMGGMEKFEA.

Residue 231 to 233 participates in L-serine binding; that stretch reads TAE. 262–264 lines the ATP pocket; the sequence is RSE. E285 is an L-serine binding site. 349-352 serves as a coordination point for ATP; the sequence is EISS. Position 385 (S385) interacts with L-serine.

It belongs to the class-II aminoacyl-tRNA synthetase family. Type-1 seryl-tRNA synthetase subfamily. In terms of assembly, homodimer. The tRNA molecule binds across the dimer.

The protein resides in the cytoplasm. The catalysed reaction is tRNA(Ser) + L-serine + ATP = L-seryl-tRNA(Ser) + AMP + diphosphate + H(+). It catalyses the reaction tRNA(Sec) + L-serine + ATP = L-seryl-tRNA(Sec) + AMP + diphosphate + H(+). The protein operates within aminoacyl-tRNA biosynthesis; selenocysteinyl-tRNA(Sec) biosynthesis; L-seryl-tRNA(Sec) from L-serine and tRNA(Sec): step 1/1. Functionally, catalyzes the attachment of serine to tRNA(Ser). Is also able to aminoacylate tRNA(Sec) with serine, to form the misacylated tRNA L-seryl-tRNA(Sec), which will be further converted into selenocysteinyl-tRNA(Sec). This chain is Serine--tRNA ligase, found in Halalkalibacterium halodurans (strain ATCC BAA-125 / DSM 18197 / FERM 7344 / JCM 9153 / C-125) (Bacillus halodurans).